Here is a 294-residue protein sequence, read N- to C-terminus: tRNA dimethylallyltransferase (294 aa).

Position 10–17 (10–17 (GPTAVGKT)) interacts with ATP. 12–17 (TAVGKT) lines the substrate pocket. The tract at residues 35-38 (DSQQ) is interaction with substrate tRNA.

The protein belongs to the IPP transferase family. Monomer. It depends on Mg(2+) as a cofactor.

It catalyses the reaction adenosine(37) in tRNA + dimethylallyl diphosphate = N(6)-dimethylallyladenosine(37) in tRNA + diphosphate. Its function is as follows. Catalyzes the transfer of a dimethylallyl group onto the adenine at position 37 in tRNAs that read codons beginning with uridine, leading to the formation of N6-(dimethylallyl)adenosine (i(6)A). The sequence is that of tRNA dimethylallyltransferase from Streptococcus pneumoniae serotype 19F (strain G54).